The chain runs to 465 residues: Adenosylhomocysteinase (465 aa).

3 residues coordinate substrate: T56, D131, and E191. Residue 192–194 (TTT) participates in NAD(+) binding. The substrate site is built by K221 and D225. Residues N226, 255 to 260 (GYGDVG), E278, N313, 334 to 336 (IGH), and N379 each bind NAD(+).

It belongs to the adenosylhomocysteinase family. Requires NAD(+) as cofactor.

Its subcellular location is the cytoplasm. The catalysed reaction is S-adenosyl-L-homocysteine + H2O = L-homocysteine + adenosine. It functions in the pathway amino-acid biosynthesis; L-homocysteine biosynthesis; L-homocysteine from S-adenosyl-L-homocysteine: step 1/1. May play a key role in the regulation of the intracellular concentration of adenosylhomocysteine. The protein is Adenosylhomocysteinase of Chelativorans sp. (strain BNC1).